The chain runs to 435 residues: NADH-quinone oxidoreductase subunit D (435 aa).

Belongs to the complex I 49 kDa subunit family. As to quaternary structure, NDH-1 is composed of 14 different subunits. Subunits NuoB, C, D, E, F, and G constitute the peripheral sector of the complex.

It localises to the cell inner membrane. It catalyses the reaction a quinone + NADH + 5 H(+)(in) = a quinol + NAD(+) + 4 H(+)(out). Its function is as follows. NDH-1 shuttles electrons from NADH, via FMN and iron-sulfur (Fe-S) centers, to quinones in the respiratory chain. The immediate electron acceptor for the enzyme in this species is believed to be ubiquinone. Couples the redox reaction to proton translocation (for every two electrons transferred, four hydrogen ions are translocated across the cytoplasmic membrane), and thus conserves the redox energy in a proton gradient. The polypeptide is NADH-quinone oxidoreductase subunit D (Xanthomonas campestris pv. campestris (strain 8004)).